A 944-amino-acid polypeptide reads, in one-letter code: MTVSGPETPEPRPSDPGASSAEQLRKEGNELFKCGDYEGALTAYTQALSLGATPQDQAILHRNRAACHLKLEDYSKAESEASKAIEKDGGDVKALYRRSQALEKLGRLDQAVLDLKRCVSLEPKNKVFQESLRNIGGQIQEKVRYMSSTDAKVEQMFQILLDPKEKGTEKKQKASQNLVVLAREDAGAEKIFRSNGVQLLQRLLDTEETDLMLAALRTLVGICSEHQSRTVATLSVLGTRRVVSILGVENQAVSLAACHLLQVIFDALKEGVKKGFRGKEGAIIVDPARELKVLINSLLELLTEVGVSGQGRDNALTLLIKMVPRKSPKDPNNSLTLWVIDQGLKKILEVGGSLQDAAGELTVTANSRMSASILLSKLFDDLKCDAERENFHRLCENYIRNWFEGHGLAGKLRAIQTVSCLLQGPCDAGNRALELSGVMESVIALCASEREEEQLVAVEALIHAAGKAKRASFITANGVSLLKDLYKGSERDSIRIRALVGLCKLGSAGGTDFSMKQFAEGSTLKLAKQCRKWLCNDQIDAGTRRWAVEGLAYLTFDADVKEEFVEDEAALKALFQLSRSEERSVLFAVGSALVNCTNSYDYEEPDPKMVELAKYAKQHVPEQHPKDKPSFVRARVKKLLAAGVVSAMTCMVKTESPVLTNSCRELLSRVFLALVEEVEDRGTVVAQGGGKALLPLALEGTDVGQTKAAQALAKLTITSNPEMTFPGERIYEVVRPLVSLLHLSCSGLQNFEALMALTNLAGISERLRQKILKEKAVPMIEGYMFEEHEMIRRAATECMCNLAMSKEVQDLFEAQGNDRLKLLVLYSGEDDELLRRAAAGGLAMLTSMRPALCSRIPQVTTHWLEILQALLLSPNQELQHRGTVVVLNMMQSSKEIAGTLMESEVLEILSVLAKGEESPVTRAAAACLEKAVEYRLIQPNQDGE.

The disordered stretch occupies residues 1-25; sequence MTVSGPETPEPRPSDPGASSAEQLR. TPR repeat units lie at residues 21–54, 58–91, and 92–125; these read AEQL…GATP, AILH…DGGD, and VKAL…EPKN. N6-acetyllysine is present on lysine 70. Lysine 483 carries the N6-acetyllysine modification.

As to quaternary structure, interacts with PGR isoforms A and B as well as with NR3C1 in the absence of ligand, and with HSP90AB1. Binding to HSP90AB1 involves 2 UNC45A monomers per HSP90AB1 dimer. As to expression, detected in spleen, bone marrow, lung and ovary, and at lower levels in testis, kidney, heart and brain (at protein level). Ubiquitous. Detected in uterus, large intestine, kidney, spleen, lung, brain, liver and ovary.

The protein resides in the cytoplasm. It localises to the perinuclear region. Its subcellular location is the nucleus. Functionally, may act as co-chaperone for HSP90 (Potential). Prevents the stimulation of HSP90AB1 ATPase activity by AHSA1. Positive factor in promoting PGR function in the cell. May be necessary for proper folding of myosin (Potential). Necessary for normal cell proliferation. Necessary for normal myotube formation and myosin accumulation during muscle cell development. May play a role in erythropoiesis in stroma cells in the spleen. This Mus musculus (Mouse) protein is Protein unc-45 homolog A (Unc45a).